A 328-amino-acid chain; its full sequence is tRNA-modifying protein YgfZ (328 aa).

Trp-28 and Trp-190 together coordinate folate.

This sequence belongs to the tRNA-modifying YgfZ family.

It localises to the cytoplasm. In terms of biological role, folate-binding protein involved in regulating the level of ATP-DnaA and in the modification of some tRNAs. It is probably a key factor in regulatory networks that act via tRNA modification, such as initiation of chromosomal replication. This Sodalis glossinidius (strain morsitans) protein is tRNA-modifying protein YgfZ.